The following is a 328-amino-acid chain: Phosphatidylglycerol--prolipoprotein diacylglyceryl transferase (328 aa).

3 helical membrane passes run 15–35, 58–78, and 106–126; these read VIQG…ILIS, FMFS…TLVY, and GMAI…IINT. R156 serves as a coordination point for a 1,2-diacyl-sn-glycero-3-phospho-(1'-sn-glycerol). The next 2 helical transmembrane spans lie at 242 to 262 and 289 to 309; these read GFIF…IEYL and ISMG…WVVV.

This sequence belongs to the Lgt family.

Its subcellular location is the cell inner membrane. It carries out the reaction L-cysteinyl-[prolipoprotein] + a 1,2-diacyl-sn-glycero-3-phospho-(1'-sn-glycerol) = an S-1,2-diacyl-sn-glyceryl-L-cysteinyl-[prolipoprotein] + sn-glycerol 1-phosphate + H(+). It functions in the pathway protein modification; lipoprotein biosynthesis (diacylglyceryl transfer). Catalyzes the transfer of the diacylglyceryl group from phosphatidylglycerol to the sulfhydryl group of the N-terminal cysteine of a prolipoprotein, the first step in the formation of mature lipoproteins. The sequence is that of Phosphatidylglycerol--prolipoprotein diacylglyceryl transferase from Borrelia garinii subsp. bavariensis (strain ATCC BAA-2496 / DSM 23469 / PBi) (Borreliella bavariensis).